A 1116-amino-acid polypeptide reads, in one-letter code: Probable chitinase LysM11 (1116 aa).

Residues 233–283 (GTYTIQTNDNCAEIAAHFGVTQDDIYDLNEDTWGWAGCGTNDLKADQVICL) form the LysM domain. The 374-residue stretch at 346–719 (FYHVAYFEVF…LGVDPDSDEA (374 aa)) folds into the GH18 domain. Glu-466 (proton donor) is an active-site residue. 2 residues coordinate chitin: Tyr-467 and Trp-701.

It belongs to the glycosyl hydrolase 18 family. Chitinase class V subfamily.

It catalyses the reaction Random endo-hydrolysis of N-acetyl-beta-D-glucosaminide (1-&gt;4)-beta-linkages in chitin and chitodextrins.. Its function is as follows. Probable chitinase involved in the degradation of chitin, a component of the cell walls of fungi and exoskeletal elements of some animals (including worms and arthropods). Might be involved in manipulation of host defenses for successful infection. The chain is Probable chitinase LysM11 from Penicillium expansum (Blue mold rot fungus).